A 422-amino-acid polypeptide reads, in one-letter code: Beta-1,3-galactosyltransferase 2 (422 aa).

The Cytoplasmic portion of the chain corresponds to 1–24 (MLQWRRRHCCFAKMTWNAKRSLFR). The chain crosses the membrane as a helical; Signal-anchor for type II membrane protein span at residues 25 to 45 (THLIGVLSLVFLFAMFLFFNH). The Lumenal portion of the chain corresponds to 46-422 (HDWLPGRAGF…AGRYRHRKLH (377 aa)). 5 N-linked (GlcNAc...) asparagine glycosylation sites follow: asparagine 75, asparagine 100, asparagine 119, asparagine 176, and asparagine 226. The interval 90-110 (TLRPQTATNSNNTDLSPQGVT) is disordered.

This sequence belongs to the glycosyltransferase 31 family. Mn(2+) serves as cofactor. In terms of tissue distribution, detected in heart and brain.

Its subcellular location is the golgi apparatus membrane. The catalysed reaction is an N-acetyl-beta-D-glucosaminyl derivative + UDP-alpha-D-galactose = a beta-D-galactosyl-(1-&gt;3)-N-acetyl-beta-D-glucosaminyl derivative + UDP + H(+). It catalyses the reaction a beta-D-GlcNAc-(1-&gt;3)-beta-D-Gal-(1-&gt;4)-beta-D-Glc-(1&lt;-&gt;1)-Cer(d18:1(4E)) + UDP-alpha-D-galactose = a beta-D-Gal-(1-&gt;3)-beta-D-GlcNAc-(1-&gt;3)-beta-D-Gal-(1-&gt;4)-beta-D-Glc-(1&lt;-&gt;1')-Cer(d18:1(4E)) + UDP + H(+). It carries out the reaction a neolactoside IV(3)-beta-GlcNAc-nLc4Cer(d18:1(4E)) + UDP-alpha-D-galactose = a neolactoside IV(3)-beta-[Gal-beta-(1-&gt;3)-GlcNAc]-nLc4Cer(d18:1(4E)) + UDP + H(+). The protein operates within protein modification; protein glycosylation. In terms of biological role, beta-1,3-galactosyltransferase that transfers galactose from UDP-galactose to substrates with a terminal beta-N-acetylglucosamine (beta-GlcNAc) residue. Can also utilize substrates with a terminal galactose residue, albeit with lower efficiency. Involved in the biosynthesis of the carbohydrate moieties of glycolipids and glycoproteins. Inactive towards substrates with terminal alpha-N-acetylglucosamine (alpha-GlcNAc) or alpha-N-acetylgalactosamine (alpha-GalNAc) residues. The protein is Beta-1,3-galactosyltransferase 2 of Homo sapiens (Human).